A 63-amino-acid polypeptide reads, in one-letter code: Hyphancin-3F (63 aa).

The N-terminal stretch at 1–22 (MNFSRILFFVFACFVALASVSA) is a signal peptide. Residues 23–26 (APEP) constitute a propeptide, removed by a dipeptidylpeptidase. L61 bears the Leucine amide mark.

Belongs to the cecropin family.

The protein localises to the secreted. Functionally, has antibacterial activity. The chain is Hyphancin-3F from Hyphantria cunea (Fall webworm moth).